A 718-amino-acid polypeptide reads, in one-letter code: U-box domain-containing protein 5 (718 aa).

The U-box domain occupies 218–292; sequence TLPEKFKCTL…SEWCAKNGLD (75 aa). ARM repeat units follow at residues 493 to 532, 534 to 571, and 573 to 613; these read PHGP…NLSS, MEIC…NLCS, and EKGR…QLCV. The interval 662-704 is disordered; that stretch reads KEEEEEVSSRPEGRTTASPTSQVVTPVTHPEPVKITPSPKKSG. Polar residues predominate over residues 676-686; it reads TTASPTSQVVT.

It carries out the reaction S-ubiquitinyl-[E2 ubiquitin-conjugating enzyme]-L-cysteine + [acceptor protein]-L-lysine = [E2 ubiquitin-conjugating enzyme]-L-cysteine + N(6)-ubiquitinyl-[acceptor protein]-L-lysine.. The protein operates within protein modification; protein ubiquitination. Functionally, functions as an E3 ubiquitin ligase. The chain is U-box domain-containing protein 5 (PUB5) from Arabidopsis thaliana (Mouse-ear cress).